We begin with the raw amino-acid sequence, 542 residues long: Tubby-related protein 1 (542 aa).

Residues 1-289 form a disordered region; that stretch reads MPLRDETLRE…RAPSPPVEVD (289 aa). The segment covering 91–104 has biased composition (basic and acidic residues); the sequence is FLRDPEAKKRDPRE. Residues 114-132 are compositionally biased toward acidic residues; sequence AEDEEEEEEEDEEDEEEEA. The segment covering 146–157 has biased composition (basic and acidic residues); that stretch reads PLREKSSADLKE. Over residues 262 to 275 the composition is skewed to basic residues; the sequence is SNQKGKAKGKGKKK.

It belongs to the TUB family. Homodimer. May interact with ABCF1, PSIP1, ZEB1 and HMGB2 (Potential). Interacts with DNM1. Interacts with F-actin. Interacts with TUB. Interacts with TYRO3. As to expression, retina-specific.

Its subcellular location is the cytoplasm. It localises to the cell membrane. It is found in the secreted. The protein localises to the synapse. Its function is as follows. Required for normal development of photoreceptor synapses. Required for normal photoreceptor function and for long-term survival of photoreceptor cells. Interacts with cytoskeleton proteins and may play a role in protein transport in photoreceptor cells. Binds lipids, especially phosphatidylinositol 3-phosphate, phosphatidylinositol 4-phosphate, phosphatidylinositol 5-phosphate, phosphatidylinositol 3,4-bisphosphate, phosphatidylinositol 4,5-bisphosphate, phosphatidylinositol 3,4,5-bisphosphate, phosphatidylserine and phosphatidic acid (in vitro). Contribute to stimulation of phagocytosis of apoptotic retinal pigment epithelium (RPE) cells and macrophages. The protein is Tubby-related protein 1 (TULP1) of Homo sapiens (Human).